The chain runs to 256 residues: uncharacterized protein (256 aa).

The HTH cro/C1-type domain occupies Ile-10–Tyr-64. The segment at residues Leu-21 to Arg-40 is a DNA-binding region (H-T-H motif).

This is an uncharacterized protein from Mycobacterium bovis (strain ATCC BAA-935 / AF2122/97).